Reading from the N-terminus, the 421-residue chain is MTAFFKTLRNHWKKTTAGLCLLTWGGHWLYGKHCDNLLRRAACQEAQVFGNQLIPPNAQVKKATVFLNPAACKGKARTLFEKNAAPILHLSGMDVTVVKTDYEGQAKKLLELMESTDVIIVAGGDGTLQEVVTGVLRRTDEATFSKIPIGFIPLGQTSSLSHTLFAESGNKVQHITDATLAIVKGETVPLDVLQIKGEKEQPVYAMTGLRWGSFRDAGVKVSKYWYLGPLKTKAAHFFSTLQEWPQTHQASISYTGPRERPPIEPEETPPRPSLYRRILRRLASFWAQPQDASSREVSPEVWKDVQLSTIELSITTRNTQLDLMSKEDFMNICIEPDTVSKGDFIIIGSKKVRDPGLRAAGTECLQASHCTLVLPEGTEGSFSIDSEEYEAMPVEVKLLPRKLRFFCDPRKREQMLPSTSQ.

At Lys-6 the chain carries N6-acetyllysine. Residues 15 to 31 (TTAGLCLLTWGGHWLYG) form a hydrophobic region. The 142-residue stretch at 58-199 (AQVKKATVFL…LDVLQIKGEK (142 aa)) folds into the DAGKc domain. Residues 252–271 (ISYTGPRERPPIEPEETPPR) are disordered.

It belongs to the AGK family. As to quaternary structure, component of the TIM22 complex, which core is composed of TIMM22, associated with TIMM10 (TIMM10A and/or TIMM10B), TIMM9, AGK and TIMM29. Interacts with SMIM26. Mg(2+) is required as a cofactor. As to expression, ubiquitously expressed.

The protein resides in the mitochondrion inner membrane. Its subcellular location is the mitochondrion intermembrane space. It catalyses the reaction a monoacylglycerol + ATP = a monoacyl-sn-glycero-3-phosphate + ADP + H(+). The catalysed reaction is a 1,2-diacyl-sn-glycerol + ATP = a 1,2-diacyl-sn-glycero-3-phosphate + ADP + H(+). It carries out the reaction an N-acylsphing-4-enine + ATP = an N-acylsphing-4-enine 1-phosphate + ADP + H(+). The enzyme catalyses 1,2-di-(9Z-octadecenoyl)-sn-glycerol + ATP = 1,2-di-(9Z-octadecenoyl)-sn-glycero-3-phosphate + ADP + H(+). It catalyses the reaction 1-(9Z-octadecenoyl)-sn-glycerol + ATP = 1-(9Z-octadecenoyl)-sn-glycero-3-phosphate + ADP + H(+). The catalysed reaction is 1-(5Z,8Z,11Z,14Z-eicosatetraenoyl)-sn-glycerol + ATP = 1-(5Z,8Z,11Z,14Z-eicosatetraenoyl)-sn-glycero-3-phosphate + ADP + H(+). It carries out the reaction a 1-acyl-sn-glycerol + ATP = a 1-acyl-sn-glycero-3-phosphate + ADP + H(+). The enzyme catalyses 1-hexadecanoyl-sn-glycerol + ATP = 1-hexadecanoyl-sn-glycero-3-phosphate + ADP + H(+). It catalyses the reaction a 2-acylglycerol + ATP = a 2-acyl-sn-glycerol 3-phosphate + ADP + H(+). The catalysed reaction is 2-(5Z,8Z,11Z,14Z-eicosatetraenoyl)-glycerol + ATP = 2-(5Z,8Z,11Z,14Z-eicosatetraenoyl)-sn-glycero-3-phosphate + ADP + H(+). It carries out the reaction N-(hexanoyl)sphing-4-enine + ATP = N-hexanoylsphing-4-enine 1-phosphate + ADP + H(+). It participates in lipid metabolism; glycerolipid metabolism. Its activity is regulated as follows. Both the ceramide and diacylglycerol kinase activities are inhibited by sphingosine and stimulated by cardiolipin. Both activities are stimulated by calcium when magnesium concentrations are low but inhibited by calcium when magnesium concentrations are high. Its function is as follows. Lipid kinase that can phosphorylate both monoacylglycerol and diacylglycerol to form lysophosphatidic acid (LPA) and phosphatidic acid (PA), respectively. Phosphorylates ceramide but not sphingosine. Phosphorylates 1,2-dioleoylglycerol more rapidly than 2,3-dioleoylglycerol. Independently of its lipid kinase activity, acts as a component of the TIM22 complex. The TIM22 complex mediates the import and insertion of multi-pass transmembrane proteins into the mitochondrial inner membrane by forming a twin-pore translocase that uses the membrane potential as the external driving force. In the TIM22 complex, required for the import of a subset of metabolite carriers into mitochondria, such as ANT1/SLC25A4 and SLC25A24, while it is not required for the import of TIMM23. Overexpression increases the formation and secretion of LPA, resulting in transactivation of EGFR and activation of the downstream MAPK signaling pathway, leading to increased cell growth. This Mus musculus (Mouse) protein is Acylglycerol kinase, mitochondrial.